A 1348-amino-acid polypeptide reads, in one-letter code: Adhesion G protein-coupled receptor F5 (1348 aa).

Positions 1 to 21 (MRSPRTFTFYFLLLVICSSEA) are cleaved as a signal peptide. Residues 22-1019 (ALSTPTEPIV…LKILLDIISY (998 aa)) lie on the Extracellular side of the membrane. An SEA domain is found at 163-271 (PEAFITLKLK…NSFQGTPSNE (109 aa)). 3 Ig-like domains span residues 268–366 (PSNE…LDVT), 367–464 (PIRI…IAVT), and 469–559 (ANLT…KDVT). 4 N-linked (GlcNAc...) asparagine glycosylation sites follow: Asn270, Asn286, Asn337, and Asn349. Residues Cys291 and Cys348 are joined by a disulfide bond. The cysteines at positions 389 and 447 are disulfide-linked. 3 N-linked (GlcNAc...) asparagine glycosylation sites follow: Asn470, Asn538, and Asn665. Cys490 and Cys543 are oxidised to a cystine. The residue at position 818 (Ser818) is a Phosphoserine. The GAIN-B domain occupies 841 to 1005 (TPPFLAHPNV…SILMSPDSPD (165 aa)). 2 disulfide bridges follow: Cys953-Cys987 and Cys972-Cys989. The interval 953–1005 (CVFWNFSLANNTGGWDSSGCSVEDDGRDNRDRVFCKCNHLTSFSILMSPDSPD) is GPS. A tethered agonist region spans residues 993–1008 (TSFSILMSPDSPDPGS). Residues 1020–1040 (IGLGFSIVSLAACLVVEAMVW) form a helical membrane-spanning segment. Over 1041–1055 (KSVTKNRTSYMRHIC) the chain is Cytoplasmic. A helical membrane pass occupies residues 1056-1076 (IVNIAFCLLIADIWFIVAGAI). At 1077 to 1092 (HDGRYPLNETACVAAT) the chain is on the extracellular side. Residues 1093 to 1113 (FFIHFFYLSVFFWMLTLGLML) traverse the membrane as a helical segment. The Cytoplasmic portion of the chain corresponds to 1114-1130 (FYRLIFILHDASKSTQK). A helical transmembrane segment spans residues 1131–1151 (AIAFSLGYGCPLIISSITVGV). The Extracellular segment spans residues 1152-1175 (TQPQEVYMRKNACWLNWEDTRALL). A helical membrane pass occupies residues 1176–1196 (AFAIPALIIVVVNVSITVVVI). At 1197–1221 (TKILRPSIGDKPGKQEKSSLFQISK) the chain is on the cytoplasmic side. Residues 1222 to 1242 (SIGVLTPLLGLTWGFGLATVI) form a helical membrane-spanning segment. Over 1243–1250 (QGSNAVFH) the chain is Extracellular. A helical membrane pass occupies residues 1251–1271 (IIFTLLNAFQGLFILLFGCLW). Topologically, residues 1272–1348 (DQKVQEALLH…NSSSAYSLLN (77 aa)) are cytoplasmic. Thr1302 is modified (phosphothreonine). Ser1309 carries the phosphoserine modification. The interval 1328–1348 (STPETTSSSLENSSSAYSLLN) is disordered.

Belongs to the G-protein coupled receptor 2 family. Adhesion G-protein coupled receptor (ADGR) subfamily. As to quaternary structure, homodimer; disulfide-linked. Heterodimer of 2 chains generated by proteolytic processing; the large extracellular N-terminal fragment and the membrane-bound C-terminal fragment predominantly remain associated and non-covalently linked. Fragment generates by the processing enzyme furin remains attached to the extracellular N-terminal fragment. Interacts (via N-terminal extracellular domain) with SFTPD. In terms of processing, highly glycosylated. Proteolytically cleaved at multiple sites: one in the GPS region of the GAIN-B domain (S1 site) and the other in the SEA domain (S2 site). The proteolytic cleavage at S1 site generates an extracellular subunit and a seven-transmembrane subunit. The proteolytic cleavage at S2 site generates a fragment that undergoes proteolytic cleavage by the processing enzyme furin. As to expression, widely expressed, with highest levels in lung, pancreas, kidney and heart. In the kidney, expressed more abundantly in the medulla than in the cortex, predominantly expressed in A-intercalated cells (at protein level). Expressed in endothelial cells from various tissues, including brain, heart, kidney, liver, lung and muscle. In the lung, expressed in alveolar type II (ATII) cells (at protein level). Expressed in pancreatic islets of Langerhans, predominantly in delta cells, as well as in endothelial cells. Expressed in white adipose tissue.

It is found in the cell membrane. As an adhesion G protein-coupled receptor (aGPCR) exhibits a large N-terminal extracellular domain containing highly conserved GPCR autoproteolysis-inducing (GAIN) domain. During synthesis, intracellular autoproteolytic processing of nascent chain within the GAIN domain generates a mature protein, consisting of an N-terminal fragment that is non-covalently linked to the C-terminal fragment. The mature protein is routed to the plasma membrane where the N- and C-terminal fragments remain associated, forming the holoreceptor. Dissociation of the aGPCR fragments stimulates G protein signaling through the action of the tethered-peptide agonist stalk that is occluded within the GAIN domain in the holoreceptor form. This dissociation might be induced by ligand binding, such as that of sFNDC4. Its function is as follows. Adhesion G protein-coupled receptor. In alveolar type II (ATII or AT2) cells, required for normal lung surfactant homeostasis. Modulation of both surfactant secretion and uptake by ATII cells is mediated by the downstream activation of GNAQ/GNA11 proteins and may be a consequence of increased cortical F-actin assembly induced by ADGRF5 activation. In the kidney, may play a role in the regulation of acid excretion into the primary urine, possibly by regulating the surface expression of V-ATPase proton pump. As a receptor for soluble FNDC4 (sFNDC4), required for proper systemic glucose tolerance, specifically sensitizing white adipose tissue to insulin. Also plays a role in sFNDC4-induced decrease of local inflammation in white adipose tissue. This Mus musculus (Mouse) protein is Adhesion G protein-coupled receptor F5 (Adgrf5).